A 304-amino-acid polypeptide reads, in one-letter code: Cytochrome c biogenesis protein CcsA (304 aa).

Transmembrane regions (helical) follow at residues 11–31 (SLGF…FWAV), 37–57 (AGLV…QLIL), 63–83 (GHFP…ACTL), 96–116 (IVAA…SFAL), 141–161 (VIMV…AVLV), 212–232 (TITV…VWAN), 246–263 (TWAL…HTRL), and 275–295 (VAVV…LLGI).

It belongs to the CcmF/CycK/Ccl1/NrfE/CcsA family. In terms of assembly, may interact with ccs1.

It is found in the cellular thylakoid membrane. Functionally, required during biogenesis of c-type cytochromes (cytochrome c6 and cytochrome f) at the step of heme attachment. The protein is Cytochrome c biogenesis protein CcsA of Synechococcus sp. (strain CC9605).